The chain runs to 133 residues: Small ribosomal subunit protein uS8 (133 aa).

It belongs to the universal ribosomal protein uS8 family. Part of the 30S ribosomal subunit. Contacts proteins S5 and S12.

In terms of biological role, one of the primary rRNA binding proteins, it binds directly to 16S rRNA central domain where it helps coordinate assembly of the platform of the 30S subunit. The chain is Small ribosomal subunit protein uS8 from Deinococcus deserti (strain DSM 17065 / CIP 109153 / LMG 22923 / VCD115).